We begin with the raw amino-acid sequence, 791 residues long: Nuclear cap-binding protein subunit 1-A (791 aa).

The interval Met-1 to Pro-24 is disordered. One can recognise an MIF4G domain in the interval Glu-28 to Lys-240. Residues Leu-641–Ile-714 adopt a coiled-coil conformation. Positions Gln-664–Gly-687 are disordered.

The protein belongs to the NCBP1 family. Component of the nuclear cap-binding complex (CBC), a heterodimer composed of ncbp1/cbp80 and ncbp2/cbp20 that interacts with m7GpppG-capped RNA. Component of an alternative nuclear cap-binding complex (CBC) composed of ncbp1/cbp80 and ncbp3.

Its subcellular location is the nucleus. The protein resides in the cytoplasm. Functionally, component of the cap-binding complex (CBC), which binds cotranscriptionally to the 5'-cap of pre-mRNAs and is involved in various processes such as pre-mRNA splicing, translation regulation, nonsense-mediated mRNA decay, RNA-mediated gene silencing (RNAi) by microRNAs (miRNAs) and mRNA export. The CBC complex is involved in mRNA export from the nucleus, leading to the recruitment of the mRNA export machinery to the 5'-end of mRNA and to mRNA export in a 5' to 3' direction through the nuclear pore. The CBC complex is also involved in mediating U snRNA and intronless mRNAs export from the nucleus. The CBC complex is essential for a pioneer round of mRNA translation, before steady state translation when the CBC complex is replaced by cytoplasmic cap-binding protein eIF4E. The pioneer round of mRNA translation mediated by the CBC complex plays a central role in nonsense-mediated mRNA decay (NMD), NMD only taking place in mRNAs bound to the CBC complex, but not on eIF4E-bound mRNAs. The CBC complex enhances NMD in mRNAs containing at least one exon-junction complex (EJC), promoting the interaction between UPF1 and UPF2. The CBC complex is also involved in 'failsafe' NMD, which is independent of the EJC complex, while it does not participate in Staufen-mediated mRNA decay (SMD). During cell proliferation, the CBC complex is also involved in microRNAs (miRNAs) biogenesis via its interaction with SRRT/ARS2 and is required for miRNA-mediated RNA interference. The CBC complex also acts as a negative regulator of parn, thereby acting as an inhibitor of mRNA deadenylation. In the CBC complex, NCBP1/CBP80 does not bind directly capped RNAs (m7GpppG-capped RNA) but is required to stabilize the movement of the N-terminal loop of NCBP2/CBP20 and lock the CBC into a high affinity cap-binding state with the cap structure. Associates with NCBP3 to form an alternative cap-binding complex (CBC) which plays a key role in mRNA export. The conventional CBC with NCBP2 binds both small nuclear RNA (snRNA) and messenger (mRNA) and is involved in their export from the nucleus whereas the alternative CBC with NCBP3 does not bind snRNA and associates only with mRNA thereby playing a role only in mRNA export. The polypeptide is Nuclear cap-binding protein subunit 1-A (ncbp1-a) (Xenopus laevis (African clawed frog)).